The sequence spans 505 residues: uncharacterized protein (505 aa).

The interval 1-52 (MVDGSIHVPVQSHEGQHDNSSSLNEEIQTSQDPLGIVESYQESSTSDFDKSH) is disordered. Residues 18 to 32 (DNSSSLNEEIQTSQD) are compositionally biased toward polar residues. The next 10 helical transmembrane spans lie at 141-161 (FWIV…TNTF), 173-193 (AFQT…YTVF), 208-228 (GWKY…VVLA), 235-255 (LSAS…SFIF), 265-285 (ILGV…DVIS), 290-310 (SAVN…CYGV), 326-346 (VVIG…TFIF), 362-382 (GYLA…PILF), 389-409 (FYNI…IHVF), and 415-435 (WLYP…HVFV). A phosphoserine mark is found at serine 463, serine 466, and serine 467.

Belongs to the SLC35F solute transporter family.

The protein localises to the golgi apparatus membrane. This is an uncharacterized protein from Schizosaccharomyces pombe (strain 972 / ATCC 24843) (Fission yeast).